A 384-amino-acid polypeptide reads, in one-letter code: Deoxyguanosinetriphosphate triphosphohydrolase-like protein (384 aa).

The tract at residues 12–39 (ELASYASDPSKTRGRRHSEPPPENRTEF) is disordered. Positions 28–39 (HSEPPPENRTEF) are enriched in basic and acidic residues. Positions 73–208 (RLTHSLEVAQ…ANLADEVAYN (136 aa)) constitute an HD domain.

This sequence belongs to the dGTPase family. Type 2 subfamily.

The protein is Deoxyguanosinetriphosphate triphosphohydrolase-like protein of Bordetella parapertussis (strain 12822 / ATCC BAA-587 / NCTC 13253).